The primary structure comprises 340 residues: Terpene synthase 29 (340 aa).

Mg(2+) contacts are provided by Asp132, Glu197, Asn257, Ser261, and Glu265. The DDXXXXD motif motif lies at 132–138 (DEPDILE). The short motif at 257–265 (NDILSFYKE) is the NSE/DTE motif element.

This sequence belongs to the trichodiene synthase family. Requires Mg(2+) as cofactor.

In terms of biological role, terpene cyclase that catalyzes the cyclization of farnesyl diphosphate (FPP) to a single major terpene scaffold whose chemical structure is still unknown. In Postia placenta (strain ATCC 44394 / Madison 698-R) (Brown rot fungus), this protein is Terpene synthase 29.